Consider the following 362-residue polypeptide: UDP-N-acetylglucosamine--N-acetylmuramyl-(pentapeptide) pyrophosphoryl-undecaprenol N-acetylglucosamine transferase (362 aa).

UDP-N-acetyl-alpha-D-glucosamine contacts are provided by residues 14–16, asparagine 122, arginine 163, serine 190, and glutamine 285; that span reads TGG.

The protein belongs to the glycosyltransferase 28 family. MurG subfamily.

The protein resides in the cell inner membrane. The enzyme catalyses di-trans,octa-cis-undecaprenyl diphospho-N-acetyl-alpha-D-muramoyl-L-alanyl-D-glutamyl-meso-2,6-diaminopimeloyl-D-alanyl-D-alanine + UDP-N-acetyl-alpha-D-glucosamine = di-trans,octa-cis-undecaprenyl diphospho-[N-acetyl-alpha-D-glucosaminyl-(1-&gt;4)]-N-acetyl-alpha-D-muramoyl-L-alanyl-D-glutamyl-meso-2,6-diaminopimeloyl-D-alanyl-D-alanine + UDP + H(+). Its pathway is cell wall biogenesis; peptidoglycan biosynthesis. In terms of biological role, cell wall formation. Catalyzes the transfer of a GlcNAc subunit on undecaprenyl-pyrophosphoryl-MurNAc-pentapeptide (lipid intermediate I) to form undecaprenyl-pyrophosphoryl-MurNAc-(pentapeptide)GlcNAc (lipid intermediate II). This Prochlorococcus marinus (strain MIT 9215) protein is UDP-N-acetylglucosamine--N-acetylmuramyl-(pentapeptide) pyrophosphoryl-undecaprenol N-acetylglucosamine transferase.